A 1027-amino-acid chain; its full sequence is Multidrug resistance protein MdtC (1027 aa).

12 helical membrane passes run 16-36 (LLSL…PVAP), 333-353 (EVER…FLFL), 360-380 (LIPA…MYLC), 387-407 (LSLM…IVVL), 431-451 (VGFT…PLLL), 463-483 (FAIT…TLTP), 528-548 (WIMA…ISAP), 853-873 (LILI…LYES), 875-895 (IHPL…LLAL), 897-917 (LFDT…IGIV), 953-973 (PIIM…LSSG), and 984-1004 (ITIV…TPII).

The protein belongs to the resistance-nodulation-cell division (RND) (TC 2.A.6) family. MdtC subfamily. Part of a tripartite efflux system composed of MdtA, MdtB and MdtC. MdtC forms a heteromultimer with MdtB.

The protein localises to the cell inner membrane. In Proteus mirabilis (strain HI4320), this protein is Multidrug resistance protein MdtC.